We begin with the raw amino-acid sequence, 471 residues long: V-type ATP synthase beta chain (471 aa).

Belongs to the ATPase alpha/beta chains family.

Its function is as follows. Produces ATP from ADP in the presence of a proton gradient across the membrane. The V-type beta chain is a regulatory subunit. In Deinococcus deserti (strain DSM 17065 / CIP 109153 / LMG 22923 / VCD115), this protein is V-type ATP synthase beta chain.